The sequence spans 144 residues: Deoxyuridine 5'-triphosphate nucleotidohydrolase (144 aa).

Residues 63–65, asparagine 76, and 80–82 each bind substrate; these read RSG and TID.

It belongs to the dUTPase family. The cofactor is Mg(2+).

It catalyses the reaction dUTP + H2O = dUMP + diphosphate + H(+). Its pathway is pyrimidine metabolism; dUMP biosynthesis; dUMP from dCTP (dUTP route): step 2/2. Functionally, this enzyme is involved in nucleotide metabolism: it produces dUMP, the immediate precursor of thymidine nucleotides and it decreases the intracellular concentration of dUTP so that uracil cannot be incorporated into DNA. The protein is Deoxyuridine 5'-triphosphate nucleotidohydrolase of Alkaliphilus metalliredigens (strain QYMF).